Consider the following 785-residue polypeptide: Endonuclease MutS2 (785 aa).

Glycine 334–threonine 341 is a binding site for ATP. Residues leucine 710–lysine 785 form the Smr domain.

Belongs to the DNA mismatch repair MutS family. MutS2 subfamily. In terms of assembly, homodimer. Binds to stalled ribosomes, contacting rRNA.

Functionally, endonuclease that is involved in the suppression of homologous recombination and thus may have a key role in the control of bacterial genetic diversity. Acts as a ribosome collision sensor, splitting the ribosome into its 2 subunits. Detects stalled/collided 70S ribosomes which it binds and splits by an ATP-hydrolysis driven conformational change. Acts upstream of the ribosome quality control system (RQC), a ribosome-associated complex that mediates the extraction of incompletely synthesized nascent chains from stalled ribosomes and their subsequent degradation. Probably generates substrates for RQC. This Brevibacillus brevis (strain 47 / JCM 6285 / NBRC 100599) protein is Endonuclease MutS2.